Consider the following 519-residue polypeptide: Protein twist (519 aa).

Disordered regions lie at residues 53-77 (MQQQQQQQQHQQQQQQHQQQQQQQY), 131-156 (NFEQQQQQQQQQQQQQTATPAGVATA), 301-321 (YEAYDPANSLNGSTYSSSDRD), and 368-389 (FRKPRRRLKRKPSKTEETDEFS). Low complexity-rich tracts occupy residues 54 to 76 (QQQQQQQQHQQQQQQHQQQQQQQ) and 134 to 146 (QQQQQQQQQQQQQ). The span at 308–317 (NSLNGSTYSS) shows a compositional bias: polar residues. Residues 368-379 (FRKPRRRLKRKP) are compositionally biased toward basic residues. A bHLH domain is found at 390–441 (NQRVMANVRERQRTQSLNDAFKALQQIIPTLPSDKLSKIQTLKLATRYIDFL).

As to quaternary structure, efficient DNA binding requires dimerization with another bHLH protein. Homodimer.

The protein localises to the nucleus. Involved in the establishment and dorsoventral patterning of germ layers in the embryo. The protein is Protein twist of Drosophila virilis (Fruit fly).